Reading from the N-terminus, the 213-residue chain is Guanylate kinase (213 aa).

The Guanylate kinase-like domain maps to 12 to 190 (GLCLVVAAPS…AIDQVRTILH (179 aa)). Position 19 to 26 (19 to 26 (APSGAGKS)) interacts with ATP.

It belongs to the guanylate kinase family.

It localises to the cytoplasm. It catalyses the reaction GMP + ATP = GDP + ADP. In terms of biological role, essential for recycling GMP and indirectly, cGMP. The protein is Guanylate kinase of Granulibacter bethesdensis (strain ATCC BAA-1260 / CGDNIH1).